Reading from the N-terminus, the 214-residue chain is MSYPQWPGQLRDGLAAMNLSLSDSQQQQLLAFLALLNKWNKAYNLTAVRDERVMVSRQLLDSLSILPWVTTDHLLDVGAGGGLPGIPLAIVVPEKRFTLLDSNGKKTRFLNQCVLELGLDNVEVIHGRAEDCQPDQPFTQISSRAFTALENLVTWCGGLLANDGEFLAMKGQYPDDEVAALPAGWQVESSHSLTVPGADGERHLLIVARAERHR.

Residues glycine 78, leucine 83, 129 to 130, and arginine 144 each bind S-adenosyl-L-methionine; that span reads AE.

It belongs to the methyltransferase superfamily. RNA methyltransferase RsmG family.

The protein localises to the cytoplasm. It carries out the reaction guanosine(527) in 16S rRNA + S-adenosyl-L-methionine = N(7)-methylguanosine(527) in 16S rRNA + S-adenosyl-L-homocysteine. Specifically methylates the N7 position of guanine in position 527 of 16S rRNA. The protein is Ribosomal RNA small subunit methyltransferase G of Marinobacter nauticus (strain ATCC 700491 / DSM 11845 / VT8) (Marinobacter aquaeolei).